Consider the following 494-residue polypeptide: Neuronal acetylcholine receptor subunit alpha-6 (494 aa).

The signal sequence occupies residues 1–30; the sequence is MLNSRDQGNLHSGLCLWLCGFLALFKGSTG. At 31-240 the chain is on the extracellular side; the sequence is CESEEQLFHR…TYSFYIRRLP (210 aa). N54 and N171 each carry an N-linked (GlcNAc...) asparagine glycan. Cystine bridges form between C158/C172 and C222/C223. 3 helical membrane passes run 241–265, 272–290, and 306–327; these read MFYTINLIIPCLFISFLTVLVFYLP, VTLCISVLLSLTVFLLVIT, and YLLFTMIFVTLSIVVTVFVLNI. Over 328-465 the chain is Cytoplasmic; it reads HYRTPATHTM…WKYMAMVVDR (138 aa). Positions 399 to 423 are disordered; the sequence is QKSSDIAPGKRRSSQQPARWVAENS. A Phosphoserine modification is found at S401. A helical transmembrane segment spans residues 466-485; the sequence is VFLWVFIIVCVFGTVGLFLQ.

The protein belongs to the ligand-gated ion channel (TC 1.A.9) family. Acetylcholine receptor (TC 1.A.9.1) subfamily. Alpha-6/CHRNA6 sub-subfamily. As to quaternary structure, neuronal AChR is composed of two different types of subunits: alpha and non-alpha (beta). CHRNA6/alpha-6 subunit can be combined to CHRNB2/beta-2 and CHRNA4/alpha-4 to give rise to functional receptors. Interacts with LYPD6. In terms of tissue distribution, predominantly expressed in only a few brain areas, including dopaminergic neurons, norepirephrine neurons and cells of the visual system.

It localises to the synaptic cell membrane. The enzyme catalyses K(+)(in) = K(+)(out). The catalysed reaction is Na(+)(in) = Na(+)(out). It catalyses the reaction Ca(2+)(in) = Ca(2+)(out). Activated by a myriad of ligands such as acetylcholine, cytisine and nicotine. CHRNA6 nAChR activity is inhibited by the antagonists alpha-conotoxin MII and PIA, a small disulfide-constrained peptides from cone snails. In terms of biological role, component of neuronal acetylcholine receptors (nAChRs) that function as pentameric, ligand-gated cation channels with high calcium permeability among other activities. nAChRs are excitatory neurotrasnmitter receptors formed by a collection of nAChR subunits known to mediate synaptic transmission in the nervous system and the neuromuscular junction. Each nAchR subunit confers differential attributes to channel properties, including activation, deactivation and desensitization kinetics, pH sensitivity, cation permeability, and binding to allosteric modulators. CHRNA6 forms pentameric channels with CHRNB2 and CHRNA4 that exhibit high sensitivity to ACh and nicotine and are predominantly expressed in only a few brain areas, including dopaminergic neurons, norepirephrine neurons and cells of the visual system. nAChrs containing CHRNA6 subunits mediate endogenous cholinergic modulation of dopamine and gamma-aminobutyric acid (GABA) release in response to nicotine at nerve terminals. The protein is Neuronal acetylcholine receptor subunit alpha-6 (Chrna6) of Mus musculus (Mouse).